Reading from the N-terminus, the 506-residue chain is Probable cytosol aminopeptidase (506 aa).

Residues Lys278 and Asp283 each coordinate Mn(2+). Lys290 is an active-site residue. Mn(2+)-binding residues include Asp301, Asp360, and Glu362. Residue Arg364 is part of the active site.

It belongs to the peptidase M17 family. Requires Mn(2+) as cofactor.

The protein localises to the cytoplasm. The enzyme catalyses Release of an N-terminal amino acid, Xaa-|-Yaa-, in which Xaa is preferably Leu, but may be other amino acids including Pro although not Arg or Lys, and Yaa may be Pro. Amino acid amides and methyl esters are also readily hydrolyzed, but rates on arylamides are exceedingly low.. It catalyses the reaction Release of an N-terminal amino acid, preferentially leucine, but not glutamic or aspartic acids.. Functionally, presumably involved in the processing and regular turnover of intracellular proteins. Catalyzes the removal of unsubstituted N-terminal amino acids from various peptides. The sequence is that of Probable cytosol aminopeptidase from Ralstonia nicotianae (strain ATCC BAA-1114 / GMI1000) (Ralstonia solanacearum).